The chain runs to 317 residues: Aspartate carbamoyltransferase catalytic subunit (317 aa).

2 residues coordinate carbamoyl phosphate: Arg-65 and Thr-66. Lys-93 provides a ligand contact to L-aspartate. Residues Arg-115, His-145, and Gln-148 each coordinate carbamoyl phosphate. Residues Arg-178 and Arg-233 each contribute to the L-aspartate site. Carbamoyl phosphate is bound by residues Gly-274 and Pro-275.

The protein belongs to the aspartate/ornithine carbamoyltransferase superfamily. ATCase family. As to quaternary structure, heterododecamer (2C3:3R2) of six catalytic PyrB chains organized as two trimers (C3), and six regulatory PyrI chains organized as three dimers (R2).

It carries out the reaction carbamoyl phosphate + L-aspartate = N-carbamoyl-L-aspartate + phosphate + H(+). Its pathway is pyrimidine metabolism; UMP biosynthesis via de novo pathway; (S)-dihydroorotate from bicarbonate: step 2/3. Catalyzes the condensation of carbamoyl phosphate and aspartate to form carbamoyl aspartate and inorganic phosphate, the committed step in the de novo pyrimidine nucleotide biosynthesis pathway. In Bordetella bronchiseptica (strain ATCC BAA-588 / NCTC 13252 / RB50) (Alcaligenes bronchisepticus), this protein is Aspartate carbamoyltransferase catalytic subunit.